A 130-amino-acid chain; its full sequence is Small ribosomal subunit protein uS9 (130 aa).

Belongs to the universal ribosomal protein uS9 family.

In Cupriavidus taiwanensis (strain DSM 17343 / BCRC 17206 / CCUG 44338 / CIP 107171 / LMG 19424 / R1) (Ralstonia taiwanensis (strain LMG 19424)), this protein is Small ribosomal subunit protein uS9.